The sequence spans 137 residues: Fluoride-specific ion channel FluC 1 (137 aa).

Transmembrane regions (helical) follow at residues Leu-4–Gly-24, Leu-37–Ile-57, Ile-62–Phe-82, and Ile-100–Tyr-120. Residues Gly-77 and Thr-80 each contribute to the Na(+) site.

This sequence belongs to the fluoride channel Fluc/FEX (TC 1.A.43) family.

The protein resides in the cell membrane. The catalysed reaction is fluoride(in) = fluoride(out). Na(+) is not transported, but it plays an essential structural role and its presence is essential for fluoride channel function. Functionally, fluoride-specific ion channel. Important for reducing fluoride concentration in the cell, thus reducing its toxicity. This Bacillus cereus (strain ATCC 10987 / NRS 248) protein is Fluoride-specific ion channel FluC 1.